Here is a 515-residue protein sequence, read N- to C-terminus: G-protein coupled receptor 176 (515 aa).

The Extracellular segment spans residues 1–41; sequence MGHNSSWVSPNTSHPRNTSGAEAGANLSAFGELSEAQLYRQ. N-linked (GlcNAc...) asparagine glycosylation is found at N4, N11, N17, and N26. Residues 42 to 64 traverse the membrane as a helical segment; that stretch reads FTTTVQVVIFIGSLLGNFMVLWS. The Cytoplasmic portion of the chain corresponds to 65-77; it reads TCRTTVFKSVTNR. Residues 78-98 form a helical membrane-spanning segment; the sequence is FIKNLACSGICASVVCVPFDI. The Extracellular portion of the chain corresponds to 99 to 108; the sequence is ILSSSPHCCW. Residues 109 to 129 traverse the membrane as a helical segment; sequence WIYTMLFCKVLKFLHKVFCSV. The Cytoplasmic portion of the chain corresponds to 130–157; the sequence is TVLSFPAIALDRYYSVLYPLERKISDAK. A helical transmembrane segment spans residues 158 to 177; it reads SRELVMYIWAHAVVASVPVF. Residues 178-204 lie on the Extracellular side of the membrane; the sequence is AVTNVADIYAMSTCTEVWSNSLGHLVY. A helical transmembrane segment spans residues 205–225; the sequence is VLIYNVTTVIVPVAVVFLFLI. Residues 226 to 264 are Cytoplasmic-facing; the sequence is LIRRALSASQKKKVIIAALRTPQNTISIPYASQREAELH. A helical transmembrane segment spans residues 265–285; sequence ATLLSMVTVFILCSVPYATLV. Over 286 to 301 the chain is Extracellular; that stretch reads VYQTVLNVPNTSVFLL. A helical transmembrane segment spans residues 302 to 322; sequence LTAIWLPKVSLLANPVLFLTV. Residues 323 to 515 lie on the Cytoplasmic side of the membrane; sequence NKSVRKCLVG…KVSIFPKVDS (193 aa). The interval 407-435 is disordered; that stretch reads SCPEGEQEPPQLAPSVPPPGTVDSEPRVS. The segment covering 417-426 has biased composition (pro residues); the sequence is QLAPSVPPPG.

This sequence belongs to the G-protein coupled receptor 1 family. Expressed mainly in the brain, with prominent expression in the SCN (at protein level).

It localises to the cell membrane. Functionally, orphan receptor involved in normal circadian rhythm behavior. Acts through the G-protein subclass G(z)-alpha and has an agonist-independent basal activity to repress cAMP production. The polypeptide is G-protein coupled receptor 176 (Gpr176) (Mus musculus (Mouse)).